The chain runs to 395 residues: MKRFLLCSFALVLLYPAGIDMYLVGLPRIAADLNASEAQLHIAFSVYLAGMATAMLFAGKIADQSGRKPVAIVGALVFMMASLLCSRASEGSLFLSGRFLQGVGAGGCYVVAFAILRDTLDEHRRAKVLSLLNGITCIVPVLAPVVGHLIMLRFPWQSLFYTMSAMGIIVGLLSLFILRETRPARLAPRDLSRSSPAAESLVNRFFVSRLAITTLSVSVILTFVNASPVLLMEVMGFSRGDYAITMALTAGVSMVVSFSTPFALGLFKPRTLMLVSQGLFLTAGVTLSLAHTNTVTLFGLTLICAGFSVGFGVAMSQALGPFSLRAGVASSTLGIAQVCGSSLWIWLAAILGISAMNMLIGILIGCSIVSILLIFSVAPNRSVAEHEEIPYQSRS.

12 helical membrane-spanning segments follow: residues 4–24, 42–62, 69–89, 93–113, 131–151, 158–178, 217–237, 247–267, 271–291, 295–315, 333–353, and 358–378; these read FLLC…MYLV, IAFS…GKIA, PVAI…SRAS, LFLS…VVAF, LLNG…HLIM, SLFY…LFIL, VSVI…VMGF, ALTA…LGLF, TLML…SLAH, VTLF…GVAM, LGIA…ILGI, and MLIG…FSVA.

The protein belongs to the major facilitator superfamily. DHA1 family. MdtL (TC 2.A.1.2.22) subfamily.

The protein localises to the cell inner membrane. In Salmonella agona (strain SL483), this protein is Multidrug resistance protein MdtL.